The primary structure comprises 244 residues: MILLGVNIDHVATLRNARGTRYPSPVEAALVAETAGADLITLHLREDRRHIKDDDLAVMRAAIKTRMNLEMALTDEMLDNALRVLPQDVCIVPEKREELTTEGGLDVIRYFDRIADFTRQLQAKGIRVSLFIDPDDEQIKASHETGATVVELHTGRYADAESHDIRQRELTRIRHAAIVGVDLGLVVNAGHGLSYHNVQPVAAIREIRELNIGHAIVAHALMVGFAPAVREMKALMVEARHNAA.

Position 7 (Asn7) interacts with 3-amino-2-oxopropyl phosphate. 9 to 10 (DH) provides a ligand contact to 1-deoxy-D-xylulose 5-phosphate. Residue Arg18 participates in 3-amino-2-oxopropyl phosphate binding. His43 (proton acceptor) is an active-site residue. 1-deoxy-D-xylulose 5-phosphate contacts are provided by Arg45 and His50. Glu70 functions as the Proton acceptor in the catalytic mechanism. Thr100 provides a ligand contact to 1-deoxy-D-xylulose 5-phosphate. Catalysis depends on His191, which acts as the Proton donor. 3-amino-2-oxopropyl phosphate contacts are provided by residues Gly192 and 213 to 214 (GH).

This sequence belongs to the PNP synthase family. Homooctamer; tetramer of dimers.

The protein resides in the cytoplasm. It catalyses the reaction 3-amino-2-oxopropyl phosphate + 1-deoxy-D-xylulose 5-phosphate = pyridoxine 5'-phosphate + phosphate + 2 H2O + H(+). It participates in cofactor biosynthesis; pyridoxine 5'-phosphate biosynthesis; pyridoxine 5'-phosphate from D-erythrose 4-phosphate: step 5/5. Catalyzes the complicated ring closure reaction between the two acyclic compounds 1-deoxy-D-xylulose-5-phosphate (DXP) and 3-amino-2-oxopropyl phosphate (1-amino-acetone-3-phosphate or AAP) to form pyridoxine 5'-phosphate (PNP) and inorganic phosphate. The sequence is that of Pyridoxine 5'-phosphate synthase from Laribacter hongkongensis (strain HLHK9).